The chain runs to 486 residues: NADH-quinone oxidoreductase subunit N (486 aa).

13 consecutive transmembrane segments (helical) span residues 5–25 (IGLS…ASLL), 41–61 (LITL…LVVF), 77–97 (GVTQ…MVMM), 118–138 (SAVG…FIGL), 165–185 (YFIL…FIFG), 209–229 (FLFG…IAPF), 245–265 (TAFM…RIIA), 275–295 (LFDI…AAAI), 304–324 (IAYS…TAGV), 335–355 (VIFY…IAAM), 380–400 (ALCL…LGFF), 413–433 (GLLW…YYYL), and 458–478 (VTAV…GPIF).

The protein belongs to the complex I subunit 2 family. As to quaternary structure, NDH-1 is composed of 14 different subunits. Subunits NuoA, H, J, K, L, M, N constitute the membrane sector of the complex.

It is found in the cell inner membrane. The enzyme catalyses a quinone + NADH + 5 H(+)(in) = a quinol + NAD(+) + 4 H(+)(out). NDH-1 shuttles electrons from NADH, via FMN and iron-sulfur (Fe-S) centers, to quinones in the respiratory chain. The immediate electron acceptor for the enzyme in this species is believed to be ubiquinone. Couples the redox reaction to proton translocation (for every two electrons transferred, four hydrogen ions are translocated across the cytoplasmic membrane), and thus conserves the redox energy in a proton gradient. The sequence is that of NADH-quinone oxidoreductase subunit N from Bdellovibrio bacteriovorus (strain ATCC 15356 / DSM 50701 / NCIMB 9529 / HD100).